Here is a 957-residue protein sequence, read N- to C-terminus: Protein translocase subunit SecA (957 aa).

ATP is bound by residues Gln-87, 105–109 (GEGKT), and Asp-512. Residues 924–957 (AAPAQAPSKSKRSAGRNDPCPCGSGQKYKKCCGK) form a disordered region. 4 residues coordinate Zn(2+): Cys-943, Cys-945, Cys-954, and Cys-955.

This sequence belongs to the SecA family. Monomer and homodimer. Part of the essential Sec protein translocation apparatus which comprises SecA, SecYEG and auxiliary proteins SecDF-YajC and YidC. The cofactor is Zn(2+).

Its subcellular location is the cell inner membrane. The protein localises to the cytoplasm. The enzyme catalyses ATP + H2O + cellular proteinSide 1 = ADP + phosphate + cellular proteinSide 2.. Part of the Sec protein translocase complex. Interacts with the SecYEG preprotein conducting channel. Has a central role in coupling the hydrolysis of ATP to the transfer of proteins into and across the cell membrane, serving as an ATP-driven molecular motor driving the stepwise translocation of polypeptide chains across the membrane. This is Protein translocase subunit SecA from Geobacter sp. (strain M21).